We begin with the raw amino-acid sequence, 901 residues long: Sperm-associated antigen 1 (901 aa).

TPR repeat units lie at residues 213-246 (ANRE…LPTA), 247-279 (IAYN…DPGN), and 280-313 (VKAL…EPDN). Residues 322-437 (EVERDLKNSE…DNPSGLKRRG (116 aa)) form a disordered region. Phosphoserine is present on residues Ser-351 and Ser-359. TPR repeat units follow at residues 430–464 (PSGL…EPTG), 472–505 (SILY…HPFS), 507–539 (KPLL…DCGI), 606–639 (FQAL…NSKA), and 640–673 (CAIY…DGEN). The segment at 694–776 (GVDPSQVLLS…AEPAEKLDVS (83 aa)) is disordered. Ser-703 carries the phosphoserine modification. Residues 708-717 (EAARHLDTKN) are compositionally biased toward basic and acidic residues. Ser-739 and Ser-740 each carry phosphoserine. Position 756-763 (756-763 (PARDGVED)) interacts with GTP. Residue Ser-766 is modified to Phosphoserine.

As to expression, detected in cerebellum, tongue, esophagus, forestomach, sperm and testis.

It localises to the cytoplasm. The protein localises to the dynein axonemal particle. Functionally, may play a role in the cytoplasmic assembly of the ciliary dynein arms. May play a role in fertilization. Binds GTP and has GTPase activity. This is Sperm-associated antigen 1 (Spag1) from Mus musculus (Mouse).